The primary structure comprises 111 residues: Cell cycle protein GpsB (111 aa).

The stretch at 38 to 72 (IKDYEAFHKEFEQLKQQNARLKRELEEQKLAATQV) forms a coiled coil.

The protein belongs to the GpsB family. In terms of assembly, forms polymers through the coiled coil domains. Interacts with PBP1, MreC and EzrA.

The protein localises to the cytoplasm. Divisome component that associates with the complex late in its assembly, after the Z-ring is formed, and is dependent on DivIC and PBP2B for its recruitment to the divisome. Together with EzrA, is a key component of the system that regulates PBP1 localization during cell cycle progression. Its main role could be the removal of PBP1 from the cell pole after pole maturation is completed. Also contributes to the recruitment of PBP1 to the division complex. Not essential for septum formation. This chain is Cell cycle protein GpsB, found in Bacillus cereus (strain ATCC 10987 / NRS 248).